Reading from the N-terminus, the 207-residue chain is uncharacterized protein (207 aa).

The first 19 residues, 1 to 19 (MRFNVSFLLSLLLPTLAFA), serve as a signal peptide directing secretion.

To P.multocida PM1509.

This is an uncharacterized protein from Pasteurella multocida (strain Pm70).